A 146-amino-acid chain; its full sequence is Probable U6 snRNA-associated Sm-like protein LSm4 (146 aa).

In terms of domain architecture, Sm spans leucine 2–valine 75. A compositionally biased stretch (basic and acidic residues) spans glutamine 80–proline 91. The segment at glutamine 80–glycine 146 is disordered. The segment covering glycine 137 to glycine 146 has biased composition (gly residues).

Belongs to the snRNP Sm proteins family. As to quaternary structure, LSm subunits form a heteromer with a doughnut shape.

The protein resides in the nucleus. Binds specifically to the 3'-terminal U-tract of U6 snRNA. In Nicotiana tabacum (Common tobacco), this protein is Probable U6 snRNA-associated Sm-like protein LSm4.